The following is a 69-amino-acid chain: Alpha-conotoxin SrIA/SrIB (69 aa).

The N-terminal stretch at 1-21 (MGMRMMFTVFLLVVLATTVVS) is a signal peptide. Positions 22–48 (FTSDSAFDSRNVAANDKVSDMIALTAR) are excised as a propeptide. Intrachain disulfides connect cysteine 51-cysteine 57 and cysteine 52-cysteine 65. The interval 53-55 (SRP) is ser-Xaa-Pro motif, crucial for potent interaction with nAChR. The residue at position 55 (proline 55) is a 4-hydroxyproline; in form Sr1A and Sr1B. The residue at position 60 (glutamate 60) is a 4-carboxyglutamate; in form Sr1A. Glutamate 63 is subject to 4-carboxyglutamate; in form Sr1A and Sr1B. Residue glycine 66 is modified to Glycine amide; in form Sr1A and Sr1B.

This sequence belongs to the conotoxin A superfamily. In terms of processing, occurs in 2 forms which differ in the post-translational modification of Glu-60. In form SrA1 Glu-60 is 4-carboxyglutamate while in form SrA2 Glu-60 is unmodified. In terms of tissue distribution, expressed by the venom duct.

It is found in the secreted. Its function is as follows. Alpha-conotoxins act on postsynaptic membranes, they bind to the nicotinic acetylcholine receptors (nAChR) and thus inhibit them. Has weak blocking effects on muscle nAChR composed of alpha-1/beta-1/gamma/delta subunits and the central nervous system nAChR composed of alpha-4/beta-2 subunits. Does not detectably affect the peripheral nervous system nAChR composed of alpha-3/beta-4 subunits. Low toxin concentrations potentiate currents in muscle nAChR composed of alpha-1/beta-1/gamma/delta subunits and central nervous system nAChR composed of alpha-4/beta-2 subunits, but not the peripheral nervous system nAChR composed of alpha-3/beta-4 subunits. The polypeptide is Alpha-conotoxin SrIA/SrIB (Conus spurius (Alphabet cone)).